Here is a 39-residue protein sequence, read N- to C-terminus: Photosystem II reaction center protein L (39 aa).

Residues 18 to 38 (SLYLGLLFVFVTGVLMSSYFF) form a helical membrane-spanning segment.

This sequence belongs to the PsbL family. As to quaternary structure, PSII is composed of 1 copy each of membrane proteins PsbA, PsbB, PsbC, PsbD, PsbE, PsbF, PsbH, PsbI, PsbJ, PsbK, PsbL, PsbM, PsbT, PsbX, PsbY, PsbZ, Psb30/Ycf12, peripheral proteins PsbO, CyanoQ (PsbQ), PsbU, PsbV and a large number of cofactors. It forms dimeric complexes.

Its subcellular location is the cellular thylakoid membrane. One of the components of the core complex of photosystem II (PSII). PSII is a light-driven water:plastoquinone oxidoreductase that uses light energy to abstract electrons from H(2)O, generating O(2) and a proton gradient subsequently used for ATP formation. It consists of a core antenna complex that captures photons, and an electron transfer chain that converts photonic excitation into a charge separation. This subunit is found at the monomer-monomer interface and is required for correct PSII assembly and/or dimerization. This Parasynechococcus marenigrum (strain WH8102) protein is Photosystem II reaction center protein L.